The sequence spans 132 residues: Large-conductance mechanosensitive channel (132 aa).

2 helical membrane passes run Phe11–Gly31 and Gly75–Val95.

This sequence belongs to the MscL family. Homopentamer.

The protein resides in the cell inner membrane. Its function is as follows. Channel that opens in response to stretch forces in the membrane lipid bilayer. May participate in the regulation of osmotic pressure changes within the cell. This chain is Large-conductance mechanosensitive channel, found in Synechococcus sp. (strain JA-2-3B'a(2-13)) (Cyanobacteria bacterium Yellowstone B-Prime).